The sequence spans 159 residues: ATP synthase subunit b' (159 aa).

Residues 27 to 47 (ATLPLMAVQFLILTVILNALL) form a helical membrane-spanning segment.

The protein belongs to the ATPase B chain family. F-type ATPases have 2 components, F(1) - the catalytic core - and F(0) - the membrane proton channel. F(1) has five subunits: alpha(3), beta(3), gamma(1), delta(1), epsilon(1). F(0) has four main subunits: a(1), b(1), b'(1) and c(10-14). The alpha and beta chains form an alternating ring which encloses part of the gamma chain. F(1) is attached to F(0) by a central stalk formed by the gamma and epsilon chains, while a peripheral stalk is formed by the delta, b and b' chains.

Its subcellular location is the cellular thylakoid membrane. Its function is as follows. F(1)F(0) ATP synthase produces ATP from ADP in the presence of a proton or sodium gradient. F-type ATPases consist of two structural domains, F(1) containing the extramembraneous catalytic core and F(0) containing the membrane proton channel, linked together by a central stalk and a peripheral stalk. During catalysis, ATP synthesis in the catalytic domain of F(1) is coupled via a rotary mechanism of the central stalk subunits to proton translocation. Component of the F(0) channel, it forms part of the peripheral stalk, linking F(1) to F(0). The b'-subunit is a diverged and duplicated form of b found in plants and photosynthetic bacteria. The sequence is that of ATP synthase subunit b' from Synechococcus sp. (strain PCC 6716).